Here is a 435-residue protein sequence, read N- to C-terminus: NADH-quinone oxidoreductase subunit D (435 aa).

This sequence belongs to the complex I 49 kDa subunit family. As to quaternary structure, NDH-1 is composed of 14 different subunits. Subunits NuoB, C, D, E, F, and G constitute the peripheral sector of the complex.

The protein resides in the cell inner membrane. The enzyme catalyses a quinone + NADH + 5 H(+)(in) = a quinol + NAD(+) + 4 H(+)(out). NDH-1 shuttles electrons from NADH, via FMN and iron-sulfur (Fe-S) centers, to quinones in the respiratory chain. The immediate electron acceptor for the enzyme in this species is believed to be ubiquinone. Couples the redox reaction to proton translocation (for every two electrons transferred, four hydrogen ions are translocated across the cytoplasmic membrane), and thus conserves the redox energy in a proton gradient. The sequence is that of NADH-quinone oxidoreductase subunit D from Xanthomonas euvesicatoria pv. vesicatoria (strain 85-10) (Xanthomonas campestris pv. vesicatoria).